The chain runs to 76 residues: MPTIVNCPTCKSKVEWSEQSPHRPFCSKRCQLIDLGEWSFENNRISAPITSAEDFSQDMIEDIEAMMAKNEDDFFK.

Residues C7, C10, C26, and C30 each contribute to the Zn(2+) site.

Belongs to the DNA gyrase inhibitor YacG family. As to quaternary structure, interacts with GyrB. Requires Zn(2+) as cofactor.

Functionally, inhibits all the catalytic activities of DNA gyrase by preventing its interaction with DNA. Acts by binding directly to the C-terminal domain of GyrB, which probably disrupts DNA binding by the gyrase. This is DNA gyrase inhibitor YacG from Pseudoalteromonas translucida (strain TAC 125).